Reading from the N-terminus, the 214-residue chain is Nodulation protein A (214 aa).

Belongs to the NodA family.

Its subcellular location is the cytoplasm. Functionally, N-acyltransferase required for nodulation. Acts in the production of a small, heat-stable compound (Nod) that stimulates mitosis in various plant protoplasts. The sequence is that of Nodulation protein A from Methylobacterium nodulans (strain LMG 21967 / CNCM I-2342 / ORS 2060).